Here is a 597-residue protein sequence, read N- to C-terminus: Peptidyl-prolyl cis-trans isomerase-like 2 (597 aa).

Residues 41–114 (KKLPFNFCAA…TTDSDENKGD (74 aa)) form the U-box domain. The PPIase cyclophilin-type domain occupies 328–483 (NKGYVRMETN…NKIVIKDMII (156 aa)). Over residues 495 to 519 (KKQKEGEEERKREVARQGGTEDDRT) the composition is skewed to basic and acidic residues. 2 disordered regions span residues 495–521 (KKQK…RTTW) and 560–597 (ATTT…FDGW).

This sequence belongs to the cyclophilin-type PPIase family. PPIL2 subfamily.

The protein resides in the nucleus. It carries out the reaction [protein]-peptidylproline (omega=180) = [protein]-peptidylproline (omega=0). The enzyme catalyses S-ubiquitinyl-[E2 ubiquitin-conjugating enzyme]-L-cysteine + [acceptor protein]-L-lysine = [E2 ubiquitin-conjugating enzyme]-L-cysteine + N(6)-ubiquitinyl-[acceptor protein]-L-lysine.. Its pathway is protein modification; protein ubiquitination. In terms of biological role, may catalyze the cis-trans isomerization of proline imidic peptide bonds in oligopeptides thereby assisting the folding of proteins. May also function as a chaperone, playing a role in intracellular transport of proteins. May also have a protein ubiquitin ligase activity acting as an E3 ubiquitin protein ligase or as a ubiquitin-ubiquitin ligase promoting elongation of ubiquitin chains on proteins. This Neurospora crassa (strain ATCC 24698 / 74-OR23-1A / CBS 708.71 / DSM 1257 / FGSC 987) protein is Peptidyl-prolyl cis-trans isomerase-like 2 (ppi-2).